Consider the following 141-residue polypeptide: Ribonuclease P protein component (141 aa).

Disordered stretches follow at residues R37–T56 and R114–K141. The span at R114–R123 shows a compositional bias: basic and acidic residues.

This sequence belongs to the RnpA family. As to quaternary structure, consists of a catalytic RNA component (M1 or rnpB) and a protein subunit.

The catalysed reaction is Endonucleolytic cleavage of RNA, removing 5'-extranucleotides from tRNA precursor.. Its function is as follows. RNaseP catalyzes the removal of the 5'-leader sequence from pre-tRNA to produce the mature 5'-terminus. It can also cleave other RNA substrates such as 4.5S RNA. The protein component plays an auxiliary but essential role in vivo by binding to the 5'-leader sequence and broadening the substrate specificity of the ribozyme. The chain is Ribonuclease P protein component from Brucella suis biovar 1 (strain 1330).